The primary structure comprises 32 residues: uncharacterized protein (32 aa).

This is an uncharacterized protein from Enterobacteria phage T4 (Bacteriophage T4).